Consider the following 348-residue polypeptide: S-adenosylmethionine:tRNA ribosyltransferase-isomerase (348 aa).

It belongs to the QueA family. As to quaternary structure, monomer.

Its subcellular location is the cytoplasm. It carries out the reaction 7-aminomethyl-7-carbaguanosine(34) in tRNA + S-adenosyl-L-methionine = epoxyqueuosine(34) in tRNA + adenine + L-methionine + 2 H(+). It functions in the pathway tRNA modification; tRNA-queuosine biosynthesis. In terms of biological role, transfers and isomerizes the ribose moiety from AdoMet to the 7-aminomethyl group of 7-deazaguanine (preQ1-tRNA) to give epoxyqueuosine (oQ-tRNA). In Polynucleobacter necessarius subsp. necessarius (strain STIR1), this protein is S-adenosylmethionine:tRNA ribosyltransferase-isomerase.